The chain runs to 37 residues: Large ribosomal subunit protein bL36 (37 aa).

The protein belongs to the bacterial ribosomal protein bL36 family.

The polypeptide is Large ribosomal subunit protein bL36 (Clostridioides difficile (strain 630) (Peptoclostridium difficile)).